The chain runs to 239 residues: Ribonuclease 3 (239 aa).

One can recognise an RNase III domain in the interval Arg-12–Gly-137. Position 50 (Glu-50) interacts with Mg(2+). Asp-54 is an active-site residue. Positions 123 and 126 each coordinate Mg(2+). Glu-126 is an active-site residue. One can recognise a DRBM domain in the interval Asp-162–Ile-231.

Belongs to the ribonuclease III family. As to quaternary structure, homodimer. Requires Mg(2+) as cofactor.

The protein resides in the cytoplasm. The catalysed reaction is Endonucleolytic cleavage to 5'-phosphomonoester.. In terms of biological role, digests double-stranded RNA. Involved in the processing of primary rRNA transcript to yield the immediate precursors to the large and small rRNAs (23S and 16S). Processes some mRNAs, and tRNAs when they are encoded in the rRNA operon. Processes pre-crRNA and tracrRNA of type II CRISPR loci if present in the organism. This is Ribonuclease 3 from Rhizobium etli (strain ATCC 51251 / DSM 11541 / JCM 21823 / NBRC 15573 / CFN 42).